Consider the following 164-residue polypeptide: Large ribosomal subunit protein uL10 (164 aa).

This sequence belongs to the universal ribosomal protein uL10 family. In terms of assembly, part of the ribosomal stalk of the 50S ribosomal subunit. The N-terminus interacts with L11 and the large rRNA to form the base of the stalk. The C-terminus forms an elongated spine to which L12 dimers bind in a sequential fashion forming a multimeric L10(L12)X complex.

In terms of biological role, forms part of the ribosomal stalk, playing a central role in the interaction of the ribosome with GTP-bound translation factors. This Helicobacter pylori (strain G27) protein is Large ribosomal subunit protein uL10.